The primary structure comprises 265 residues: Pancreas transcription factor 1 subunit alpha (265 aa).

The bHLH domain maps to 115–167 (QLRQAANVRERRRMQSINDAFEGLRSHIPTLPYEKRLSKVDTLRLAIGYINFL).

Its subcellular location is the nucleus. Its function is as follows. Transcription factor implicated in the cell fate determination in various organs. Binds to the E-box consensus sequence 5'-CANNTG-3'. Required for exocrine pancreatic development. Plays a central role in directing the differentiation of retinal progenitors towards horizontal and amacrine fates. The sequence is that of Pancreas transcription factor 1 subunit alpha (ptf1a) from Danio rerio (Zebrafish).